The following is a 206-amino-acid chain: Small ribosomal subunit protein uS4 (206 aa).

Residues 18 to 46 form a disordered region; it reads NIWGRPKSPVNRREYGPGQHGQRRKGKIS. The region spanning 94–154 is the S4 RNA-binding domain; it reads RRLDAVVYRA…DRSKQMVALI (61 aa).

The protein belongs to the universal ribosomal protein uS4 family. Part of the 30S ribosomal subunit. Contacts protein S5. The interaction surface between S4 and S5 is involved in control of translational fidelity.

In terms of biological role, one of the primary rRNA binding proteins, it binds directly to 16S rRNA where it nucleates assembly of the body of the 30S subunit. Functionally, with S5 and S12 plays an important role in translational accuracy. The polypeptide is Small ribosomal subunit protein uS4 (Roseobacter denitrificans (strain ATCC 33942 / OCh 114) (Erythrobacter sp. (strain OCh 114))).